We begin with the raw amino-acid sequence, 592 residues long: Inactive heparanase-2 (592 aa).

The first 38 residues, 1 to 38 (MRVLCAFPEAMASSSSRPPSCLALVALFLALLLHLSLS), serve as a signal peptide directing secretion. Asn254 and Asn392 each carry an N-linked (GlcNAc...) asparagine glycan.

It belongs to the glycosyl hydrolase 79 family. As to quaternary structure, interacts with HPSE. Interacts with SDC1 (via glycan chains).

It is found in the secreted. The protein resides in the extracellular space. Its subcellular location is the extracellular matrix. In terms of biological role, binds heparin and heparan sulfate with high affinity, but lacks heparanase activity. Inhibits HPSE, possibly by competing for its substrates (in vitro). This Mus musculus (Mouse) protein is Inactive heparanase-2 (Hpse2).